The chain runs to 126 residues: Large ribosomal subunit protein eL28 (126 aa).

Position 2 is an N-acetylserine (Ser-2).

It belongs to the eukaryotic ribosomal protein eL28 family.

This Caenorhabditis elegans protein is Large ribosomal subunit protein eL28 (rpl-28).